The chain runs to 238 residues: ATP-dependent Clp protease ATP-binding subunit CLPT1, chloroplastic (238 aa).

The transit peptide at 1 to 64 directs the protein to the chloroplast; sequence MASYTVSFIP…VPKLRCLTSA (64 aa). The Clp R domain occupies 83–228; it reads IPKWSARAIK…KEVEKSMNED (146 aa). 2 repeat regions span residues 86 to 151 and 163 to 228; these read WSAR…LGKS and LTEP…MNED.

Belongs to the ClpA/ClpB family. In terms of assembly, monomer and homodimer. Binds to the CLP3-6 ring (P-ring). The dimers monomerize before association to the P-ring. Component of the chloroplastic Clp protease core complex which consist of at least 16 proteins: CLPP4 (3 copies), CLPP5 (3 copies), CLPR4 (2 copies), ClpP1 (1 copy), CLPP6 (1 copy), CLPR2 (1 copy), CLPT1 (1 copy), CLPT2 (1 copy) and 3 copies of CLPP3 and/or CLPR1 and/or CLPR3. Interacts with CLPC2 and CLPD. Interacts with CPN21. No interactions with CLPS1.

It is found in the plastid. The protein localises to the chloroplast. Its function is as follows. Accessory protein regulating the assembly of the plastidial Clp protease system. CLPT1 first binds to the heptameric P-ring containing the CLP3-6 subunits followed by CLPT2, and only then does the P-ring combine with the R-ring composed of the clpP1 and CLPR1-4 subunits. Once the core complex is fully assembled, it then associates to the CLPC chaperone partner to form the functional protease. CLPT1 and CLPT2 are partially redundant. In Arabidopsis thaliana (Mouse-ear cress), this protein is ATP-dependent Clp protease ATP-binding subunit CLPT1, chloroplastic.